Here is a 585-residue protein sequence, read N- to C-terminus: Arginine--tRNA ligase (585 aa).

The 'HIGH' region signature appears at 126–136; it reads PNIAKEMHVGH.

The protein belongs to the class-I aminoacyl-tRNA synthetase family. Monomer.

The protein resides in the cytoplasm. It catalyses the reaction tRNA(Arg) + L-arginine + ATP = L-arginyl-tRNA(Arg) + AMP + diphosphate. This Rippkaea orientalis (strain PCC 8801 / RF-1) (Cyanothece sp. (strain PCC 8801)) protein is Arginine--tRNA ligase.